The following is a 1349-amino-acid chain: DNA-directed RNA polymerase subunit beta' (1349 aa).

Zn(2+) contacts are provided by cysteine 70, cysteine 72, cysteine 85, and cysteine 88. 3 residues coordinate Mg(2+): aspartate 460, aspartate 462, and aspartate 464. 4 residues coordinate Zn(2+): cysteine 801, cysteine 875, cysteine 882, and cysteine 885.

The protein belongs to the RNA polymerase beta' chain family. In terms of assembly, the RNAP catalytic core consists of 2 alpha, 1 beta, 1 beta' and 1 omega subunit. When a sigma factor is associated with the core the holoenzyme is formed, which can initiate transcription. It depends on Mg(2+) as a cofactor. The cofactor is Zn(2+).

It carries out the reaction RNA(n) + a ribonucleoside 5'-triphosphate = RNA(n+1) + diphosphate. In terms of biological role, DNA-dependent RNA polymerase catalyzes the transcription of DNA into RNA using the four ribonucleoside triphosphates as substrates. This Desulfotalea psychrophila (strain LSv54 / DSM 12343) protein is DNA-directed RNA polymerase subunit beta'.